Consider the following 241-residue polypeptide: Lipoprotein MxiJ (241 aa).

Residues 1–17 form the signal peptide; the sequence is MIRYKGFILFLLLMLIG. Cys-18 carries N-palmitoyl cysteine lipidation. Cys-18 is lipidated: S-diacylglycerol cysteine.

The protein belongs to the YscJ lipoprotein family.

It localises to the cell outer membrane. Involved in the secretion of the Ipa antigens. This Shigella sonnei protein is Lipoprotein MxiJ (mxiJ).